A 253-amino-acid chain; its full sequence is Leucyl/phenylalanyl-tRNA--protein transferase (253 aa).

It belongs to the L/F-transferase family.

Its subcellular location is the cytoplasm. The catalysed reaction is N-terminal L-lysyl-[protein] + L-leucyl-tRNA(Leu) = N-terminal L-leucyl-L-lysyl-[protein] + tRNA(Leu) + H(+). The enzyme catalyses N-terminal L-arginyl-[protein] + L-leucyl-tRNA(Leu) = N-terminal L-leucyl-L-arginyl-[protein] + tRNA(Leu) + H(+). It carries out the reaction L-phenylalanyl-tRNA(Phe) + an N-terminal L-alpha-aminoacyl-[protein] = an N-terminal L-phenylalanyl-L-alpha-aminoacyl-[protein] + tRNA(Phe). Functionally, functions in the N-end rule pathway of protein degradation where it conjugates Leu, Phe and, less efficiently, Met from aminoacyl-tRNAs to the N-termini of proteins containing an N-terminal arginine or lysine. This is Leucyl/phenylalanyl-tRNA--protein transferase from Bordetella petrii (strain ATCC BAA-461 / DSM 12804 / CCUG 43448).